A 202-amino-acid chain; its full sequence is MATELRRKLVIVGDGACGKTCLLIVFSKGTFPEVYVPTVFENYVADVEVDGRHVELALWDTAGQEDYDRLRPLSYPDSHVILICFAVDSPDSLDNVQEKWISEVLHFCSSLPILLVACKADLRNDPKIIEELSKTNQHPVTTEEGQAVAQKIGAYKYLECSAKTNEGVREVFESATRAAMLKHKPKVKPSSGTKKKKRCILL.

13 to 20 (GDGACGKT) contributes to the GTP binding site. The short motif at 35–43 (YVPTVFENY) is the Effector region element. Residues 60 to 64 (DTAGQ) and 118 to 121 (CKAD) each bind GTP. The residue at position 199 (Cys199) is a Cysteine methyl ester. Cys199 carries S-geranylgeranyl cysteine lipidation. A propeptide spans 200–202 (ILL) (removed in mature form).

It belongs to the small GTPase superfamily. Rho family.

Its subcellular location is the cell membrane. Involved in the regulation of cell wall growth and actin cytoskeleton organization. Activates (1,3)-beta-D-glucan synthase. The chain is GTP-binding protein rho1 (rho1) from Schizosaccharomyces pombe (strain 972 / ATCC 24843) (Fission yeast).